Here is a 179-residue protein sequence, read N- to C-terminus: Adenine phosphoribosyltransferase (179 aa).

The protein belongs to the purine/pyrimidine phosphoribosyltransferase family. In terms of assembly, homodimer.

It localises to the cytoplasm. It carries out the reaction AMP + diphosphate = 5-phospho-alpha-D-ribose 1-diphosphate + adenine. It functions in the pathway purine metabolism; AMP biosynthesis via salvage pathway; AMP from adenine: step 1/1. In terms of biological role, catalyzes a salvage reaction resulting in the formation of AMP, that is energically less costly than de novo synthesis. In Bradyrhizobium sp. (strain ORS 278), this protein is Adenine phosphoribosyltransferase.